The sequence spans 314 residues: 4-hydroxy-3-methylbut-2-enyl diphosphate reductase (314 aa).

Residue cysteine 12 participates in [4Fe-4S] cluster binding. (2E)-4-hydroxy-3-methylbut-2-enyl diphosphate-binding residues include histidine 41 and histidine 74. Residues histidine 41 and histidine 74 each contribute to the dimethylallyl diphosphate site. Residues histidine 41 and histidine 74 each contribute to the isopentenyl diphosphate site. Cysteine 96 contributes to the [4Fe-4S] cluster binding site. (2E)-4-hydroxy-3-methylbut-2-enyl diphosphate is bound at residue histidine 124. Histidine 124 is a binding site for dimethylallyl diphosphate. An isopentenyl diphosphate-binding site is contributed by histidine 124. Glutamate 126 serves as the catalytic Proton donor. Threonine 168 provides a ligand contact to (2E)-4-hydroxy-3-methylbut-2-enyl diphosphate. Cysteine 198 is a [4Fe-4S] cluster binding site. (2E)-4-hydroxy-3-methylbut-2-enyl diphosphate-binding residues include serine 226, serine 227, asparagine 228, and serine 270. Serine 226, serine 227, asparagine 228, and serine 270 together coordinate dimethylallyl diphosphate. Isopentenyl diphosphate contacts are provided by serine 226, serine 227, asparagine 228, and serine 270.

This sequence belongs to the IspH family. [4Fe-4S] cluster serves as cofactor.

The enzyme catalyses isopentenyl diphosphate + 2 oxidized [2Fe-2S]-[ferredoxin] + H2O = (2E)-4-hydroxy-3-methylbut-2-enyl diphosphate + 2 reduced [2Fe-2S]-[ferredoxin] + 2 H(+). It carries out the reaction dimethylallyl diphosphate + 2 oxidized [2Fe-2S]-[ferredoxin] + H2O = (2E)-4-hydroxy-3-methylbut-2-enyl diphosphate + 2 reduced [2Fe-2S]-[ferredoxin] + 2 H(+). The protein operates within isoprenoid biosynthesis; dimethylallyl diphosphate biosynthesis; dimethylallyl diphosphate from (2E)-4-hydroxy-3-methylbutenyl diphosphate: step 1/1. Its pathway is isoprenoid biosynthesis; isopentenyl diphosphate biosynthesis via DXP pathway; isopentenyl diphosphate from 1-deoxy-D-xylulose 5-phosphate: step 6/6. Catalyzes the conversion of 1-hydroxy-2-methyl-2-(E)-butenyl 4-diphosphate (HMBPP) into a mixture of isopentenyl diphosphate (IPP) and dimethylallyl diphosphate (DMAPP). Acts in the terminal step of the DOXP/MEP pathway for isoprenoid precursor biosynthesis. The sequence is that of 4-hydroxy-3-methylbut-2-enyl diphosphate reductase from Pseudomonas fluorescens (strain Pf0-1).